The chain runs to 463 residues: Probable Xaa-Pro aminopeptidase pepP (463 aa).

Mn(2+) contacts are provided by Asp259, Asp270, Glu393, and Glu433.

Belongs to the peptidase M24B family. Mn(2+) is required as a cofactor.

It catalyses the reaction Release of any N-terminal amino acid, including proline, that is linked to proline, even from a dipeptide or tripeptide.. In terms of biological role, catalyzes the removal of a penultimate prolyl residue from the N-termini of peptides. The chain is Probable Xaa-Pro aminopeptidase pepP (pepP) from Pyrenophora tritici-repentis (strain Pt-1C-BFP) (Wheat tan spot fungus).